Consider the following 195-residue polypeptide: 4'-phosphopantetheinyl transferase AcpT (195 aa).

This sequence belongs to the P-Pant transferase superfamily. Gsp/Sfp/HetI/AcpT family.

The enzyme catalyses apo-[ACP] + CoA = holo-[ACP] + adenosine 3',5'-bisphosphate + H(+). Its function is as follows. May be involved in an alternative pathway for phosphopantetheinyl transfer and holo-ACP synthesis in E.coli. The native apo-protein substrate is unknown. Is able to functionally replace AcpS in vivo but only when expressed at high levels. This Escherichia coli O157:H7 protein is 4'-phosphopantetheinyl transferase AcpT (acpT).